Reading from the N-terminus, the 183-residue chain is Intermembrane phospholipid transport system binding protein MlaD (183 aa).

Residues 1 to 7 (MQTKKNE) are Cytoplasmic-facing. A helical; Signal-anchor for type II membrane protein membrane pass occupies residues 8–28 (IWVGIFLLAALLAALFVCLKA). The Periplasmic segment spans residues 29–183 (ANVTSIRTEP…ETTEPVGTTK (155 aa)). The segment at 39-116 (TYTLYATFDN…LGEQYLALNV (78 aa)) is MCE/MlaD. The disordered stretch occupies residues 155-183 (KGDDNKNSGDAPAAAPGNNETTEPVGTTK). Polar residues predominate over residues 172–183 (NNETTEPVGTTK).

It belongs to the MlaD family. In terms of assembly, the complex is composed of two ATP-binding proteins (MlaF), two transmembrane proteins (MlaE), two cytoplasmic solute-binding proteins (MlaB) and six periplasmic solute-binding proteins (MlaD).

The protein resides in the cell inner membrane. Functionally, part of the ABC transporter complex MlaFEDB, which is involved in a phospholipid transport pathway that maintains lipid asymmetry in the outer membrane by retrograde trafficking of phospholipids from the outer membrane to the inner membrane. MlaD functions in substrate binding with strong affinity for phospholipids and modulates ATP hydrolytic activity of the complex. This is Intermembrane phospholipid transport system binding protein MlaD from Escherichia coli O157:H7.